Consider the following 122-residue polypeptide: Large ribosomal subunit protein uL14 (122 aa).

Belongs to the universal ribosomal protein uL14 family. In terms of assembly, part of the 50S ribosomal subunit. Forms a cluster with proteins L3 and L19. In the 70S ribosome, L14 and L19 interact and together make contacts with the 16S rRNA in bridges B5 and B8.

Binds to 23S rRNA. Forms part of two intersubunit bridges in the 70S ribosome. The polypeptide is Large ribosomal subunit protein uL14 (Shouchella clausii (strain KSM-K16) (Alkalihalobacillus clausii)).